Here is a 114-residue protein sequence, read N- to C-terminus: Evasin P1096 (114 aa).

A signal peptide spans 1–23 (MELNAFTILHIAVFIAVGYYANT). 3 disulfide bridges follow: Cys-47–Cys-65, Cys-51–Cys-67, and Cys-61–Cys-78. An N-linked (GlcNAc...) asparagine glycan is attached at Asn-50. Residues 89–114 (DPSQDPSIDEAAPRESVSKRRSNGES) form a disordered region. Basic and acidic residues predominate over residues 99-114 (AAPRESVSKRRSNGES).

It is found in the secreted. Its function is as follows. Salivary chemokine-binding protein which binds to host chemokine CXCL8. In Ixodes ricinus (Common tick), this protein is Evasin P1096.